The sequence spans 256 residues: Hydroxyethylthiazole kinase (256 aa).

Residue Met-38 participates in substrate binding. Residues Arg-114 and Thr-159 each coordinate ATP. Gly-186 contacts substrate.

This sequence belongs to the Thz kinase family. It depends on Mg(2+) as a cofactor.

The enzyme catalyses 5-(2-hydroxyethyl)-4-methylthiazole + ATP = 4-methyl-5-(2-phosphooxyethyl)-thiazole + ADP + H(+). Its pathway is cofactor biosynthesis; thiamine diphosphate biosynthesis; 4-methyl-5-(2-phosphoethyl)-thiazole from 5-(2-hydroxyethyl)-4-methylthiazole: step 1/1. In terms of biological role, catalyzes the phosphorylation of the hydroxyl group of 4-methyl-5-beta-hydroxyethylthiazole (THZ). This is Hydroxyethylthiazole kinase from Streptococcus agalactiae serotype Ia (strain ATCC 27591 / A909 / CDC SS700).